The following is a 341-amino-acid chain: Anthranilate phosphoribosyltransferase (341 aa).

Residues Gly82, 85–86 (GD), Thr90, 92–95 (NIST), 110–118 (KHGGRSVSS), and Ser122 each bind 5-phospho-alpha-D-ribose 1-diphosphate. Residue Gly82 coordinates anthranilate. Ser94 provides a ligand contact to Mg(2+). Residue Arg168 participates in anthranilate binding. Residues Asp227 and Glu228 each coordinate Mg(2+).

It belongs to the anthranilate phosphoribosyltransferase family. Homodimer. Mg(2+) is required as a cofactor.

The catalysed reaction is N-(5-phospho-beta-D-ribosyl)anthranilate + diphosphate = 5-phospho-alpha-D-ribose 1-diphosphate + anthranilate. It functions in the pathway amino-acid biosynthesis; L-tryptophan biosynthesis; L-tryptophan from chorismate: step 2/5. Catalyzes the transfer of the phosphoribosyl group of 5-phosphorylribose-1-pyrophosphate (PRPP) to anthranilate to yield N-(5'-phosphoribosyl)-anthranilate (PRA). The chain is Anthranilate phosphoribosyltransferase from Nitrosomonas eutropha (strain DSM 101675 / C91 / Nm57).